Consider the following 263-residue polypeptide: Reductase pytE (263 aa).

The protein belongs to the avfA family.

It functions in the pathway secondary metabolite biosynthesis. Its function is as follows. Reductase; part of the gene cluster that mediates the biosynthesis of pyranterreones, a family of antioxidative compounds. The first step of pyranonigrins biosynthesis is performed by the hybrid PKS-NRPS synthetase pytA that condenses 4 malonyl-CoA units ato the acetyl starter unit by the modular PKS of pytA. The acyl chain is then connected to an L-serine through the amide bond by the modular NRPS of pytA. A tetramic acid is formed and released from the PKS-NRPS pytA to give pyranterreone 5 with the help of the thioesterase pytI. Pyranterreone 5 could be methylated by pytC to afford pyranterreone 6. Both pyranterreones 5 and 6 are subsequently oxidized by the FAD-linked oxidoreductase pytB and the cytochrome P450 monooxygenase pytD to form the fused gamma-pyrone core, resulting in pyranterreones 7 and 11, respectively. The hydroxy group at C-8 of pyranterreones 7 and 11 are dehydrated by the aspartyl protease pytH to form a delta-7 double bond to give pyranterreones 3 and 1, 2 accordingly. The exo-methylene of pyranterreone 3 could be reduced into a pendant methyl by reductase pytE to provide pyranterreone 4, also known as cordylactam. Pyranterreone 4 can be reconverted to pyranterreone 3 through pytB-catalyzed dehydrogenation or further oxidized to pyranterreones 9 and 10. This is Reductase pytE from Aspergillus terreus.